The following is a 628-amino-acid chain: uncharacterized protein (628 aa).

Disordered regions lie at residues 1–65 (MDTN…ISSA) and 80–125 (SLRN…VSLS). A compositionally biased stretch (low complexity) spans 12-21 (ISPSIASSFP). A compositionally biased stretch (polar residues) spans 25 to 37 (PFSSQNSTTSNPE). 2 stretches are compositionally biased toward low complexity: residues 48-64 (SSII…NISS) and 87-102 (SPHI…SSSS). Positions 103 to 116 (DLDKSMLDEKHPDS) are enriched in basic and acidic residues. A run of 12 helical transmembrane segments spans residues 157-177 (IITC…SISL), 203-223 (VGTG…NLLM), 230-250 (LWLS…AVLG), 259-279 (FIAL…GFAF), 294-314 (IGWY…LSAA), 324-344 (LYGY…QGLF), 417-437 (LWPP…LVNY), 454-474 (VSLL…TVLP), 483-503 (MLFF…TTFV), 511-531 (VGLL…MTWV), 542-562 (VGVA…SVVA), and 583-603 (MCGM…VQKF).

This sequence belongs to the major facilitator superfamily. Allantoate permease family.

The protein localises to the membrane. This is an uncharacterized protein from Schizosaccharomyces pombe (strain 972 / ATCC 24843) (Fission yeast).